The primary structure comprises 623 residues: NADPH-dependent diflavin oxidoreductase 1 (623 aa).

Residues 7–168 enclose the Flavodoxin-like domain; that stretch reads IVILYGSETG…VYFEYEKKVL (162 aa). FMN contacts are provided by residues 13–18, 60–63, 106–115, and Asp-142; these read SETGNA, STTG, and LGDSSYPKFN. The FAD-binding FR-type domain occupies 224–491; it reads ESLKVGRVNI…VGPGVGLAPL (268 aa). FAD contacts are provided by residues Arg-383, 413–416, and 445–448; these read RYYS and GICT. NADP(+) is bound at residue 538 to 539; sequence SR. Trp-623 is an FAD binding site.

It belongs to the NADPH-dependent diflavin oxidoreductase NDOR1 family. The protein in the N-terminal section; belongs to the flavodoxin family. This sequence in the C-terminal section; belongs to the flavoprotein pyridine nucleotide cytochrome reductase family. As to quaternary structure, interacts with DRE2; as part of the cytosolic iron-sulfur (Fe-S) protein assembly (CIA) machinery. Requires FAD as cofactor. FMN is required as a cofactor.

Its subcellular location is the cytoplasm. The protein resides in the mitochondrion. It catalyses the reaction 2 oxidized [2Fe-2S]-[protein] + NADPH = 2 reduced [2Fe-2S]-[protein] + NADP(+) + H(+). NADPH-dependent reductase which is a central component of the cytosolic iron-sulfur (Fe-S) protein assembly (CIA) machinery. Transfers electrons from NADPH via its FAD and FMN prosthetic groups to the [2Fe-2S] cluster of DRE2, another key component of the CIA machinery. In turn, this reduced cluster provides electrons for assembly of cytosolic iron-sulfur cluster proteins. Positively controls H(2)O(2)-induced cell death. In Saccharomyces cerevisiae (strain ATCC 204508 / S288c) (Baker's yeast), this protein is NADPH-dependent diflavin oxidoreductase 1.